The primary structure comprises 169 residues: Putative phosphoesterase SSP1770 (169 aa).

Catalysis depends on H34, which acts as the Proton donor. 2 short sequence motifs (HXTX) span residues 34–37 (HITI) and 115–118 (HFTI). H115 acts as the Proton acceptor in catalysis.

It belongs to the 2H phosphoesterase superfamily. YjcG family.

This Staphylococcus saprophyticus subsp. saprophyticus (strain ATCC 15305 / DSM 20229 / NCIMB 8711 / NCTC 7292 / S-41) protein is Putative phosphoesterase SSP1770.